The primary structure comprises 134 residues: uncharacterized protein (134 aa).

Positions 1–23 are cleaved as a signal peptide; that stretch reads MWHLRCSNWRGSGVFGMCFSLSG. A lipid anchor (N-palmitoyl cysteine) is attached at Cys24. A lipid anchor (S-diacylglycerol cysteine) is attached at Cys24.

The protein localises to the cell membrane. This is an uncharacterized protein from Treponema pallidum (strain Nichols).